Here is a 471-residue protein sequence, read N- to C-terminus: MTNSGADQAGTQPSRLQWGGRFAAGPASVMQAINASIGFDQRLWREDIEGSLAHAGMLAAMGIISAEDEAAIRAGLAEIAEAIAEGSFTFDPALEDIHTNIEAWLVARIGEAGRRLHTARSRNDQVATDFRLWVRNAIDSLDGQVRELMRALADRAAEHAATIMPGFTHLQTAQPVTLGHHLLAYVEMLSRDRGRLADARRRLNECPLGAAALAGTTFPIDRSMTAAALGFDRPTANSLDSVSDRDFALEFLSALSILAMHLSRFAEEIIIWTSAPYRFIRLSDAYTTGSSIMPQKRNPDAAELARAKAGRIFGALTGLLAVMKGLPLAYAKDMQEDKEPVFDAADAAELCLAAMTGMVRDMMPDVLRMRSVAGADFSTATDLADYLVRDLGLPFRTAHHVTGRIVSEAESRGLELVALPLSVMQEVEPRITEAVYDVLTIEASVAARRTLGGTAPDNVARAAARWQETLA.

It belongs to the lyase 1 family. Argininosuccinate lyase subfamily.

Its subcellular location is the cytoplasm. The catalysed reaction is 2-(N(omega)-L-arginino)succinate = fumarate + L-arginine. The protein operates within amino-acid biosynthesis; L-arginine biosynthesis; L-arginine from L-ornithine and carbamoyl phosphate: step 3/3. In Acidiphilium cryptum (strain JF-5), this protein is Argininosuccinate lyase.